The sequence spans 273 residues: 4-hydroxy-tetrahydrodipicolinate reductase (273 aa).

12–17 (GANGRM) contacts NAD(+). Residue arginine 39 coordinates NADP(+). Residues 102-104 (GTT) and 126-129 (AANF) contribute to the NAD(+) site. The active-site Proton donor/acceptor is histidine 159. Histidine 160 is a binding site for (S)-2,3,4,5-tetrahydrodipicolinate. Lysine 163 (proton donor) is an active-site residue. Residue 169-170 (GT) coordinates (S)-2,3,4,5-tetrahydrodipicolinate.

The protein belongs to the DapB family. As to quaternary structure, homotetramer.

Its subcellular location is the cytoplasm. It carries out the reaction (S)-2,3,4,5-tetrahydrodipicolinate + NAD(+) + H2O = (2S,4S)-4-hydroxy-2,3,4,5-tetrahydrodipicolinate + NADH + H(+). The catalysed reaction is (S)-2,3,4,5-tetrahydrodipicolinate + NADP(+) + H2O = (2S,4S)-4-hydroxy-2,3,4,5-tetrahydrodipicolinate + NADPH + H(+). It functions in the pathway amino-acid biosynthesis; L-lysine biosynthesis via DAP pathway; (S)-tetrahydrodipicolinate from L-aspartate: step 4/4. Catalyzes the conversion of 4-hydroxy-tetrahydrodipicolinate (HTPA) to tetrahydrodipicolinate. This Cronobacter sakazakii (strain ATCC BAA-894) (Enterobacter sakazakii) protein is 4-hydroxy-tetrahydrodipicolinate reductase.